The following is a 248-amino-acid chain: GTP cyclohydrolase 1 type 2 homolog (248 aa).

A divalent metal cation contacts are provided by H64, H65, D101, H216, and E220.

This sequence belongs to the GTP cyclohydrolase I type 2/NIF3 family. As to quaternary structure, homohexamer.

The protein is GTP cyclohydrolase 1 type 2 homolog of Borreliella burgdorferi (strain ATCC 35210 / DSM 4680 / CIP 102532 / B31) (Borrelia burgdorferi).